Reading from the N-terminus, the 305-residue chain is Ribonuclease BN (305 aa).

Residues His64, His66, Asp68, His69, His141, Asp212, and His270 each contribute to the Zn(2+) site. Asp68 (proton acceptor) is an active-site residue.

The protein belongs to the RNase Z family. RNase BN subfamily. In terms of assembly, homodimer. It depends on Zn(2+) as a cofactor.

Functionally, zinc phosphodiesterase, which has both exoribonuclease and endoribonuclease activities. In Escherichia coli O81 (strain ED1a), this protein is Ribonuclease BN.